We begin with the raw amino-acid sequence, 56 residues long: Protein hunchback (56 aa).

3 consecutive C2H2-type zinc fingers follow at residues 1–5, 11–33, and 39–56; these read HVRNH, HKCG…MKSH, and YRCA…SLKL.

It belongs to the hunchback C2H2-type zinc-finger protein family.

The protein resides in the nucleus. Its function is as follows. Gap class segmentation protein that controls development of head structures. This is Protein hunchback (hb) from Bithynia tentaculata (Spire snail).